Here is a 449-residue protein sequence, read N- to C-terminus: Phosphoglucosamine mutase (449 aa).

Ser-101 (phosphoserine intermediate) is an active-site residue. 4 residues coordinate Mg(2+): Ser-101, Asp-240, Asp-242, and Asp-244. Position 101 is a phosphoserine (Ser-101).

It belongs to the phosphohexose mutase family. Mg(2+) serves as cofactor. In terms of processing, activated by phosphorylation.

The enzyme catalyses alpha-D-glucosamine 1-phosphate = D-glucosamine 6-phosphate. Its function is as follows. Catalyzes the conversion of glucosamine-6-phosphate to glucosamine-1-phosphate. The protein is Phosphoglucosamine mutase of Streptococcus suis (strain 98HAH33).